We begin with the raw amino-acid sequence, 219 residues long: Small ribosomal subunit protein eS1 (219 aa).

It belongs to the eukaryotic ribosomal protein eS1 family. Component of the small ribosomal subunit. Mature ribosomes consist of a small (40S) and a large (60S) subunit. The 40S subunit contains about 33 different proteins and 1 molecule of RNA (18S). The 60S subunit contains about 49 different proteins and 3 molecules of RNA (25S, 5.8S and 5S).

The protein localises to the cytoplasm. The protein is Small ribosomal subunit protein eS1 of Guillardia theta (Cryptophyte).